The chain runs to 293 residues: MFALSNNLNRVNACMDGFLARIRSHVDAHAPELRSLFDTMAAEARFARDWLSEDLARLPVGAALLEVGGGVLLLSCQLAAEGFDITAIEPTGEGFGKFRQLGDIVLELAAARPTIAPCKAEDFISEKRFDFAFSLNVMEHIDLPDEAVRRVSEVLKPGASYHFLCPNYVFPYEPHFNIPTFFTKELTCRVMRHRIEGNTGMDDPKGVWRSLNWITVPKVKRFAAKDATLTLRFHRAMLVWMLERALTDKEFAGRRAQWMVAAIRSAVKLRVHHLAGYVPATLQPIMDVRLTKR.

This is an uncharacterized protein from Mycobacterium tuberculosis (strain CDC 1551 / Oshkosh).